The following is a 131-amino-acid chain: Small ribosomal subunit protein bS6 (131 aa).

The tract at residues 99–131 is disordered; the sequence is ASPMVKAKDERRERREDFATETNEDSDAGDSEE. Positions 104–116 are enriched in basic and acidic residues; sequence KAKDERRERREDF. Residues 120–131 show a composition bias toward acidic residues; the sequence is TNEDSDAGDSEE.

The protein belongs to the bacterial ribosomal protein bS6 family.

Functionally, binds together with bS18 to 16S ribosomal RNA. This chain is Small ribosomal subunit protein bS6, found in Sodalis glossinidius (strain morsitans).